The following is a 1041-amino-acid chain: Cullin-associated NEDD8-dissociated protein 1, C-terminal part (1041 aa).

Disordered stretches follow at residues 1–24 (MSSD…ELRE) and 64–103 (DMGE…EGGY). The span at 9–24 (YSHDDEHDPQTDELRE) shows a compositional bias: basic and acidic residues. A compositionally biased stretch (acidic residues) spans 65-103 (MGEDEEMSGTQDDGSEDDVTEEPDLEDDDFEDFEEEGGY). The stretch at 138-176 (SLYQQIAPAIVARFNKEREESVKLELVSTMDALVRKTAE) is one HEAT 1 repeat. The interval 189 to 237 (SVGSGSKISRKRRRQDSDASMIDFEPSMGTSSAAGTPLAAPSSPQSGPQ) is disordered. Residues 225–237 (PLAAPSSPQSGPQ) show a composition bias toward low complexity. HEAT repeat units follow at residues 242–279 (NALP…VRYG), 339–376 (PFLI…ALTP), 434–472 (LSFE…LCSR), 479–516 (NWVR…NPNT), 525–560 (MKNL…GNAQ), 598–637 (GSGL…NVGV), 670–708 (GASC…GNVK), 710–744 (YLPT…MVRR), 780–817 (LDPP…DSRD), and 822–867 (VLRP…HLGE).

It belongs to the CAND family. Interacts with candA-N. Interacts with unneddylated cullins culA and culD.

It localises to the nucleus. Functionally, assembly factor of SCF (SKP1-CUL1-F-box protein) E3 ubiquitin ligase complexes that promotes the exchange of the substrate-recognition F-box subunit in SCF complexes, thereby playing a key role in the cellular repertoire of SCF complexes. Acts as a F-box protein exchange factor when interacting with candA-N. The sequence is that of Cullin-associated NEDD8-dissociated protein 1, C-terminal part (candA-C) from Emericella nidulans (strain FGSC A4 / ATCC 38163 / CBS 112.46 / NRRL 194 / M139) (Aspergillus nidulans).